The primary structure comprises 21 residues: 78 kDa dihydrolipoyllysine-residue acetyltransferase component of pyruvate dehydrogenase complex (21 aa).

The protein belongs to the 2-oxoacid dehydrogenase family. Forms a 60-polypeptide structural core. (R)-lipoate is required as a cofactor.

It localises to the mitochondrion matrix. It carries out the reaction N(6)-[(R)-dihydrolipoyl]-L-lysyl-[protein] + acetyl-CoA = N(6)-[(R)-S(8)-acetyldihydrolipoyl]-L-lysyl-[protein] + CoA. In terms of biological role, the pyruvate dehydrogenase complex catalyzes the overall conversion of pyruvate to acetyl-CoA and CO(2). It contains multiple copies of three enzymatic components: pyruvate dehydrogenase (E1), dihydrolipoamide acetyltransferase (E2) and lipoamide dehydrogenase (E3). This is 78 kDa dihydrolipoyllysine-residue acetyltransferase component of pyruvate dehydrogenase complex from Solanum tuberosum (Potato).